The primary structure comprises 259 residues: Glutamate racemase (259 aa).

Residues aspartate 7–serine 8 and tyrosine 39–glycine 40 contribute to the substrate site. Catalysis depends on cysteine 70, which acts as the Proton donor/acceptor. Asparagine 71–threonine 72 is a substrate binding site. Cysteine 180 acts as the Proton donor/acceptor in catalysis. Threonine 181–histidine 182 contributes to the substrate binding site.

The protein belongs to the aspartate/glutamate racemases family.

It carries out the reaction L-glutamate = D-glutamate. It functions in the pathway cell wall biogenesis; peptidoglycan biosynthesis. Functionally, provides the (R)-glutamate required for cell wall biosynthesis. This is Glutamate racemase from Persephonella marina (strain DSM 14350 / EX-H1).